Here is a 292-residue protein sequence, read N- to C-terminus: Small ribosomal subunit biogenesis GTPase RsgA (292 aa).

Positions 64 to 221 (RSELFRPAVA…LVDTPGFSSL (158 aa)) constitute a CP-type G domain. Residues 113–116 (NKMD) and 164–172 (GPSGVGKST) each bind GTP. The Zn(2+) site is built by Cys245, Cys250, His252, and Cys258.

Belongs to the TRAFAC class YlqF/YawG GTPase family. RsgA subfamily. As to quaternary structure, monomer. Associates with 30S ribosomal subunit, binds 16S rRNA. It depends on Zn(2+) as a cofactor.

It localises to the cytoplasm. One of several proteins that assist in the late maturation steps of the functional core of the 30S ribosomal subunit. Helps release RbfA from mature subunits. May play a role in the assembly of ribosomal proteins into the subunit. Circularly permuted GTPase that catalyzes slow GTP hydrolysis, GTPase activity is stimulated by the 30S ribosomal subunit. The protein is Small ribosomal subunit biogenesis GTPase RsgA of Clostridium botulinum (strain 657 / Type Ba4).